A 147-amino-acid chain; its full sequence is 3-hydroxyacyl-[acyl-carrier-protein] dehydratase FabZ (147 aa).

The active site involves histidine 51.

Belongs to the thioester dehydratase family. FabZ subfamily.

The protein resides in the cytoplasm. The catalysed reaction is a (3R)-hydroxyacyl-[ACP] = a (2E)-enoyl-[ACP] + H2O. In terms of biological role, involved in unsaturated fatty acids biosynthesis. Catalyzes the dehydration of short chain beta-hydroxyacyl-ACPs and long chain saturated and unsaturated beta-hydroxyacyl-ACPs. The polypeptide is 3-hydroxyacyl-[acyl-carrier-protein] dehydratase FabZ (Anaplasma marginale (strain Florida)).